The chain runs to 159 residues: Large ribosomal subunit protein uL15 (159 aa).

Residues 1 to 18 (MKLNEIKDNEGSSKDRIR) show a composition bias toward basic and acidic residues. The interval 1-39 (MKLNEIKDNEGSSKDRIRVGRGIGSGKGKTGGRGVKGQK) is disordered. Positions 21–35 (RGIGSGKGKTGGRGV) are enriched in gly residues.

This sequence belongs to the universal ribosomal protein uL15 family. Part of the 50S ribosomal subunit.

In terms of biological role, binds to the 23S rRNA. In Allorhizobium ampelinum (strain ATCC BAA-846 / DSM 112012 / S4) (Agrobacterium vitis (strain S4)), this protein is Large ribosomal subunit protein uL15.